Consider the following 292-residue polypeptide: Nitrogenase iron protein 2 (292 aa).

12–19 contacts ATP; the sequence is GKGGIGKS. Residue cysteine 97 coordinates [4Fe-4S] cluster. Arginine 100 carries the ADP-ribosylarginine; by dinitrogenase reductase ADP-ribosyltransferase modification. Cysteine 133 lines the [4Fe-4S] cluster pocket.

Belongs to the NifH/BchL/ChlL family. Homodimer. Requires [4Fe-4S] cluster as cofactor. Post-translationally, the reversible ADP-ribosylation of Arg-100 inactivates the nitrogenase reductase and regulates nitrogenase activity.

It catalyses the reaction N2 + 8 reduced [2Fe-2S]-[ferredoxin] + 16 ATP + 16 H2O = H2 + 8 oxidized [2Fe-2S]-[ferredoxin] + 2 NH4(+) + 16 ADP + 16 phosphate + 6 H(+). In terms of biological role, the key enzymatic reactions in nitrogen fixation are catalyzed by the nitrogenase complex, which has 2 components: the iron protein and the molybdenum-iron protein. The sequence is that of Nitrogenase iron protein 2 (nifH2) from Paenibacillus durus (Paenibacillus azotofixans).